Reading from the N-terminus, the 262-residue chain is GTP cyclohydrolase FolE2 (262 aa).

The protein belongs to the GTP cyclohydrolase IV family.

It carries out the reaction GTP + H2O = 7,8-dihydroneopterin 3'-triphosphate + formate + H(+). Its pathway is cofactor biosynthesis; 7,8-dihydroneopterin triphosphate biosynthesis; 7,8-dihydroneopterin triphosphate from GTP: step 1/1. Its function is as follows. Converts GTP to 7,8-dihydroneopterin triphosphate. This Dichelobacter nodosus (strain VCS1703A) protein is GTP cyclohydrolase FolE2.